The sequence spans 114 residues: U17-barytoxin-Tl1d (114 aa).

Residues 1–20 (MKTIIVFLSLLVLATKFGDA) form the signal peptide. A propeptide spanning residues 21-74 (NEGVNQEQMKEVIQNEFREDFLNEMAAMSLLQQLEAIESTLLEKEADRNSRQKR) is cleaved from the precursor. Disulfide bonds link Cys75-Cys88, Cys82-Cys93, and Cys87-Cys108.

It belongs to the neurotoxin 14 (magi-1) family. 03 (ICK-30-40) subfamily. As to expression, expressed by the venom gland.

It localises to the secreted. Ion channel inhibitor. The protein is U17-barytoxin-Tl1d of Trittame loki (Brush-footed trapdoor spider).